Consider the following 176-residue polypeptide: Large ribosomal subunit protein uL6 (176 aa).

It belongs to the universal ribosomal protein uL6 family. As to quaternary structure, part of the 50S ribosomal subunit.

In terms of biological role, this protein binds to the 23S rRNA, and is important in its secondary structure. It is located near the subunit interface in the base of the L7/L12 stalk, and near the tRNA binding site of the peptidyltransferase center. This chain is Large ribosomal subunit protein uL6, found in Burkholderia cenocepacia (strain HI2424).